The primary structure comprises 81 residues: Photosystem I iron-sulfur center (81 aa).

2 consecutive 4Fe-4S ferredoxin-type domains span residues 2–31 (SHTV…MVPW) and 37–68 (GQIA…VRVY). [4Fe-4S] cluster is bound by residues Cys-11, Cys-14, Cys-17, Cys-21, Cys-48, Cys-51, Cys-54, and Cys-58.

As to quaternary structure, the eukaryotic PSI reaction center is composed of at least 11 subunits. [4Fe-4S] cluster is required as a cofactor.

It is found in the plastid. The protein localises to the chloroplast thylakoid membrane. It carries out the reaction reduced [plastocyanin] + hnu + oxidized [2Fe-2S]-[ferredoxin] = oxidized [plastocyanin] + reduced [2Fe-2S]-[ferredoxin]. Its function is as follows. Apoprotein for the two 4Fe-4S centers FA and FB of photosystem I (PSI); essential for photochemical activity. FB is the terminal electron acceptor of PSI, donating electrons to ferredoxin. The C-terminus interacts with PsaA/B/D and helps assemble the protein into the PSI complex. Required for binding of PsaD and PsaE to PSI. PSI is a plastocyanin/cytochrome c6-ferredoxin oxidoreductase, converting photonic excitation into a charge separation, which transfers an electron from the donor P700 chlorophyll pair to the spectroscopically characterized acceptors A0, A1, FX, FA and FB in turn. This is Photosystem I iron-sulfur center from Thalassiosira pseudonana (Marine diatom).